A 317-amino-acid chain; its full sequence is MAAPMELFCWSGGWGLPSVDLDSLAVLTYARFTGAPLKVHKITNPWRSPSGTLPALRTSHGEVISVPHRIITHLRKEKYNADYDLSARQGADTLAFMSLLEEKLLPVLKHTFWIDAKNYVEVTRKWYAEAMPFPLNFFLPGRMQRQYMERLQLLCGEHRPEDEEELEKELYQEAQECLTLLSQRLGSQKFFFGDAPASLDAFVFSYLALLQQAKLPSGKLQAHLRGLHNLCAYCAHILSLYFPWEGAKAPPPRQTPANPETEEEPYRRRNQILTVLAGLAAMAGYALLSGIVSIQRAPSARAPGTQALGMAEEDEEE.

Glycyl lysine isopeptide (Lys-Gly) (interchain with G-Cter in ubiquitin) cross-links involve residues Lys38, Lys41, and Lys78. The helical transmembrane segment at 164 to 184 threads the bilayer; sequence EELEKELYQEAQECLTLLSQR.

It belongs to the metaxin family. Interacts with MTX2/metaxin-2. Associates with the mitochondrial contact site and cristae organizing system (MICOS) complex, composed of at least MICOS10/MIC10, CHCHD3/MIC19, CHCHD6/MIC25, APOOL/MIC27, IMMT/MIC60, APOO/MIC23/MIC26 and QIL1/MIC13. This complex was also known under the names MINOS or MitOS complex. The MICOS complex associates with mitochondrial outer membrane proteins SAMM50, MTX1 and MTX2 (together described as components of the mitochondrial outer membrane sorting assembly machinery (SAM) complex) and DNAJC11, mitochondrial inner membrane protein TMEM11 and with HSPA9. The MICOS and SAM complexes together with DNAJC11 are part of a large protein complex spanning both membranes termed the mitochondrial intermembrane space bridging (MIB) complex. Interacts with ARMC1. In terms of processing, ubiquitinated by PRKN during mitophagy, leading to its degradation and enhancement of mitophagy. Deubiquitinated by USP30.

It is found in the mitochondrion outer membrane. Functionally, involved in transport of proteins into the mitochondrion. Essential for embryonic development. In Bos taurus (Bovine), this protein is Metaxin-1 (MTX1).